Consider the following 389-residue polypeptide: Type 2 DNA topoisomerase 6 subunit A (389 aa).

Positions Glu-12–Lys-162 constitute a Topo IIA-type catalytic domain. Tyr-106 serves as the catalytic O-(5'-phospho-DNA)-tyrosine intermediate. Mg(2+) contacts are provided by Glu-209 and Asp-261.

The protein belongs to the TOP6A family. Homodimer. Heterotetramer of two Top6A and two Top6B chains. Mg(2+) is required as a cofactor.

The enzyme catalyses ATP-dependent breakage, passage and rejoining of double-stranded DNA.. Its activity is regulated as follows. Not inhibited by the DNA gyrase inhibitor novobiocin, instead inhibited by eukaryotic topoisomerase inhibitors such as m- and o-amsacrine, ellipticine, and the quinolone CP-115,953. In terms of biological role, relaxes both positive and negative supercoils and exhibits a strong decatenase and unknotting activity; it cannot introduce DNA supercoils. ATP is absolutely required for DNA cleavage; the nonhydrolyzable analog AMP-PNP generates nicked or linear products from a supercoiled dsDNA substrate. Generates staggered two-nucleotide long 5' overhangs. The enzyme is covalently attached transiently to the 5'-ends of the cleaved strands. The protein is Type 2 DNA topoisomerase 6 subunit A of Saccharolobus shibatae (strain ATCC 51178 / DSM 5389 / JCM 8931 / NBRC 15437 / B12) (Sulfolobus shibatae).